A 451-amino-acid polypeptide reads, in one-letter code: Probable multidrug resistance protein NorM (451 aa).

10 helical membrane-spanning segments follow: residues 44 to 66, 92 to 109, 130 to 147, 162 to 179, 186 to 208, 247 to 269, 282 to 304, 319 to 341, 391 to 413, and 423 to 445; these read IAAI…GLLL, YWLA…LWNS, YIRI…FQVI, VIGL…YTLI, FNYG…FIAM, GFPI…LLIA, ALNI…SIRL, IILS…IILF, IIFI…FLAL, and AIGF…LFRI.

It belongs to the multi antimicrobial extrusion (MATE) (TC 2.A.66.1) family.

The protein resides in the cell membrane. Its function is as follows. Multidrug efflux pump. The protein is Probable multidrug resistance protein NorM (norM) of Buchnera aphidicola subsp. Baizongia pistaciae (strain Bp).